Here is a 299-residue protein sequence, read N- to C-terminus: NmrA-like family domain-containing protein 1 (299 aa).

NADP(+) contacts are provided by residues 11 to 16 (GATGAQ), 37 to 41 (RDPGQ), 58 to 59 (DQ), 79 to 81 (TNY), Lys92, Lys133, and 155 to 158 (YFEN). Residues 153–189 (PCYFENLLSYFLPQKAPDGRSYLLSLPMGDVPIDGMS) form an interaction with ASS1 region.

Belongs to the NmrA-type oxidoreductase family. As to quaternary structure, homodimer. Interacts with ASS1. Interaction is enhanced by low NADPH/NADP(+) ratios, which results in inhibition of ASS1 activity.

Its subcellular location is the cytoplasm. It localises to the perinuclear region. The protein resides in the nucleus. Its function is as follows. Redox sensor protein. Undergoes restructuring and subcellular redistribution in response to changes in intracellular NADPH/NADP(+) levels. At low NADPH concentrations the protein is found mainly as a monomer, and binds argininosuccinate synthase (ASS1), the enzyme involved in nitric oxide synthesis. Association with ASS1 impairs its activity and reduces the production of nitric oxide, which subsecuently prevents apoptosis. Under normal NADPH concentrations, the protein is found as a dimer and hides the binding site for ASS1. The homodimer binds one molecule of NADPH. Has higher affinity for NADPH than for NADP(+). Binding to NADPH is necessary to form a stable dimer. This Bos taurus (Bovine) protein is NmrA-like family domain-containing protein 1 (NMRAL1).